A 229-amino-acid chain; its full sequence is Enolase-phosphatase E1 (229 aa).

It belongs to the HAD-like hydrolase superfamily. MasA/MtnC family. As to quaternary structure, monomer. It depends on Mg(2+) as a cofactor.

The catalysed reaction is 5-methylsulfanyl-2,3-dioxopentyl phosphate + H2O = 1,2-dihydroxy-5-(methylsulfanyl)pent-1-en-3-one + phosphate. It functions in the pathway amino-acid biosynthesis; L-methionine biosynthesis via salvage pathway; L-methionine from S-methyl-5-thio-alpha-D-ribose 1-phosphate: step 3/6. The protein operates within amino-acid biosynthesis; L-methionine biosynthesis via salvage pathway; L-methionine from S-methyl-5-thio-alpha-D-ribose 1-phosphate: step 4/6. Bifunctional enzyme that catalyzes the enolization of 2,3-diketo-5-methylthiopentyl-1-phosphate (DK-MTP-1-P) into the intermediate 2-hydroxy-3-keto-5-methylthiopentenyl-1-phosphate (HK-MTPenyl-1-P), which is then dephosphorylated to form the acireductone 1,2-dihydroxy-3-keto-5-methylthiopentene (DHK-MTPene). In Serratia proteamaculans (strain 568), this protein is Enolase-phosphatase E1.